The following is a 452-amino-acid chain: Peptidoglycan DL-endopeptidase CwlO (452 aa).

The first 30 residues, 1-30 (MKKKVYTFGLASILGTASLFTPFMNNTASA), serve as a signal peptide directing secretion. Over residues 28–38 (ASAETSQQKQE) the composition is skewed to polar residues. Disordered regions lie at residues 28–53 (ASAE…IESK) and 258–317 (AAAA…GSVV). Composition is skewed to basic and acidic residues over residues 39–53 (IQQK…IESK) and 263–275 (KAKE…EKSD). A compositionally biased stretch (low complexity) spans 276–317 (SGSSSSSNSGSVSKSDGSSNSGSSSSKKSSSPSRNYSSGSVV). Residues 321–450 (GNAIEAAIST…KAFNGVVRRV (130 aa)) enclose the NlpC/P60 domain. Cys-358 (nucleophile) is an active-site residue. His-410 acts as the Proton acceptor in catalysis. The active site involves Asn-422.

The protein belongs to the peptidase C40 family.

It is found in the secreted. Shows a cell wall hydrolytic DL-endopeptidase activity. The polypeptide is Peptidoglycan DL-endopeptidase CwlO (cwlO) (Bacillus licheniformis (strain ATCC 14580 / DSM 13 / JCM 2505 / CCUG 7422 / NBRC 12200 / NCIMB 9375 / NCTC 10341 / NRRL NRS-1264 / Gibson 46)).